We begin with the raw amino-acid sequence, 448 residues long: tRNA-2-methylthio-N(6)-dimethylallyladenosine synthase (448 aa).

One can recognise an MTTase N-terminal domain in the interval 2 to 119; it reads KKLYIKTFGC…LSDLIAQRRK (118 aa). [4Fe-4S] cluster is bound by residues Cys-11, Cys-48, Cys-82, Cys-156, Cys-160, and Cys-163. Residues 142 to 375 form the Radical SAM core domain; sequence RQTRGSAYVS…LALIEGQSNQ (234 aa). The TRAM domain maps to 378–444; sequence QKMLGKTERV…NYTLRGELVE (67 aa).

This sequence belongs to the methylthiotransferase family. MiaB subfamily. As to quaternary structure, monomer. Requires [4Fe-4S] cluster as cofactor.

The protein resides in the cytoplasm. It carries out the reaction N(6)-dimethylallyladenosine(37) in tRNA + (sulfur carrier)-SH + AH2 + 2 S-adenosyl-L-methionine = 2-methylsulfanyl-N(6)-dimethylallyladenosine(37) in tRNA + (sulfur carrier)-H + 5'-deoxyadenosine + L-methionine + A + S-adenosyl-L-homocysteine + 2 H(+). In terms of biological role, catalyzes the methylthiolation of N6-(dimethylallyl)adenosine (i(6)A), leading to the formation of 2-methylthio-N6-(dimethylallyl)adenosine (ms(2)i(6)A) at position 37 in tRNAs that read codons beginning with uridine. This is tRNA-2-methylthio-N(6)-dimethylallyladenosine synthase from Polynucleobacter asymbioticus (strain DSM 18221 / CIP 109841 / QLW-P1DMWA-1) (Polynucleobacter necessarius subsp. asymbioticus).